The chain runs to 194 residues: Large ribosomal subunit protein bL9 (194 aa).

The protein belongs to the bacterial ribosomal protein bL9 family.

Its function is as follows. Binds to the 23S rRNA. This Paracoccus denitrificans (strain Pd 1222) protein is Large ribosomal subunit protein bL9.